Reading from the N-terminus, the 93-residue chain is Bombyxin-related peptide B (93 aa).

The signal sequence occupies residues 1–21 (MKFVLVLVSLALLVSLASVQG). Disulfide bonds link C25–C80, C37–C93, and C79–C84. Positions 47 to 71 (SGAMGAAAMYGTRGWRWAAMGGNRG) are cleaved as a propeptide — c peptide like.

The protein belongs to the insulin family. In terms of assembly, heterodimer of a B chain and an A chain linked by two disulfide bonds. In terms of tissue distribution, located in 4 pairs of medial neurosecretory cells in the brain.

It localises to the secreted. In Agrius convolvuli (Convolvulus hawk-moth), this protein is Bombyxin-related peptide B.